Here is a 949-residue protein sequence, read N- to C-terminus: Coiled-coil domain-containing protein 80 (949 aa).

Residues 1 to 22 (MMWKMGPHFTTLLAMWLVCGSA) form the signal peptide. Disordered regions lie at residues 24–79 (HSPA…RRKS), 112–132 (SSAR…MLRF), and 289–610 (HVVQ…PKKS). A compositionally biased stretch (basic and acidic residues) spans 112–123 (SSAREMVRDEGS). Over residues 295 to 307 (NEGGGGAGGTGLG) the composition is skewed to gly residues. The span at 308-328 (GDKRKEDPRRTQVHPTREAPR) shows a compositional bias: basic and acidic residues. The span at 345-380 (RATTLPPAPVTTATRATSRVVTIAARPTTTTAYPAT) shows a compositional bias: low complexity. The segment covering 419 to 429 (PRKEQQREKPQ) has biased composition (basic and acidic residues). Positions 436–445 (KATNYGSFTA) are enriched in polar residues. Over residues 463–477 (RFRDNRTDKREHGHQ) the composition is skewed to basic and acidic residues. N467 carries N-linked (GlcNAc...) asparagine glycosylation. Residues 487 to 498 (KPVKGKLPKKKD) show a composition bias toward basic residues. 3 stretches are compositionally biased toward basic and acidic residues: residues 499 to 510 (RILSNEYEDKYD), 534 to 548 (KESK…PEKE), and 556 to 581 (AKQD…EKDK). Glycyl lysine isopeptide (Lys-Gly) (interchain with G-Cter in SUMO2) cross-links involve residues K544 and K547. Residues 554–587 (KSAKQDKLLKSEKQAKKAEKKTKQEKDKNKKKKA) are a coiled coil.

This sequence belongs to the CCDC80 family. As to quaternary structure, binds to various extracellular matrix proteins. In terms of processing, phosphorylated. As to expression, expressed in brain, stomach, colon, rectum, liver, lung, kidney, adipocytes and testis.

It localises to the secreted. The protein resides in the extracellular space. The protein localises to the extracellular matrix. Promotes cell adhesion and matrix assembly. In Mus musculus (Mouse), this protein is Coiled-coil domain-containing protein 80 (Ccdc80).